Reading from the N-terminus, the 212-residue chain is Thiamine-phosphate synthase (212 aa).

4-amino-2-methyl-5-(diphosphooxymethyl)pyrimidine contacts are provided by residues 35–39 and asparagine 67; that span reads QLRDK. Residues aspartate 68 and aspartate 87 each coordinate Mg(2+). 4-amino-2-methyl-5-(diphosphooxymethyl)pyrimidine is bound at residue serine 106. 132 to 134 provides a ligand contact to 2-[(2R,5Z)-2-carboxy-4-methylthiazol-5(2H)-ylidene]ethyl phosphate; sequence TGS. Lysine 135 serves as a coordination point for 4-amino-2-methyl-5-(diphosphooxymethyl)pyrimidine. Residues glycine 163 and 183 to 184 each bind 2-[(2R,5Z)-2-carboxy-4-methylthiazol-5(2H)-ylidene]ethyl phosphate; that span reads IS.

It belongs to the thiamine-phosphate synthase family. It depends on Mg(2+) as a cofactor.

The catalysed reaction is 2-[(2R,5Z)-2-carboxy-4-methylthiazol-5(2H)-ylidene]ethyl phosphate + 4-amino-2-methyl-5-(diphosphooxymethyl)pyrimidine + 2 H(+) = thiamine phosphate + CO2 + diphosphate. It carries out the reaction 2-(2-carboxy-4-methylthiazol-5-yl)ethyl phosphate + 4-amino-2-methyl-5-(diphosphooxymethyl)pyrimidine + 2 H(+) = thiamine phosphate + CO2 + diphosphate. The enzyme catalyses 4-methyl-5-(2-phosphooxyethyl)-thiazole + 4-amino-2-methyl-5-(diphosphooxymethyl)pyrimidine + H(+) = thiamine phosphate + diphosphate. The protein operates within cofactor biosynthesis; thiamine diphosphate biosynthesis; thiamine phosphate from 4-amino-2-methyl-5-diphosphomethylpyrimidine and 4-methyl-5-(2-phosphoethyl)-thiazole: step 1/1. Its function is as follows. Condenses 4-methyl-5-(beta-hydroxyethyl)thiazole monophosphate (THZ-P) and 2-methyl-4-amino-5-hydroxymethyl pyrimidine pyrophosphate (HMP-PP) to form thiamine monophosphate (TMP). The chain is Thiamine-phosphate synthase from Methanocella arvoryzae (strain DSM 22066 / NBRC 105507 / MRE50).